The primary structure comprises 211 residues: ATP phosphoribosyltransferase (211 aa).

It belongs to the ATP phosphoribosyltransferase family. Short subfamily. As to quaternary structure, heteromultimer composed of HisG and HisZ subunits.

It is found in the cytoplasm. It catalyses the reaction 1-(5-phospho-beta-D-ribosyl)-ATP + diphosphate = 5-phospho-alpha-D-ribose 1-diphosphate + ATP. The protein operates within amino-acid biosynthesis; L-histidine biosynthesis; L-histidine from 5-phospho-alpha-D-ribose 1-diphosphate: step 1/9. In terms of biological role, catalyzes the condensation of ATP and 5-phosphoribose 1-diphosphate to form N'-(5'-phosphoribosyl)-ATP (PR-ATP). Has a crucial role in the pathway because the rate of histidine biosynthesis seems to be controlled primarily by regulation of HisG enzymatic activity. This Clostridium botulinum (strain 657 / Type Ba4) protein is ATP phosphoribosyltransferase.